Reading from the N-terminus, the 77-residue chain is Putative sulfur carrier protein AF_0188 (77 aa).

The active-site Cysteine persulfide intermediate is Cys11.

Belongs to the sulfur carrier protein TusA family.

In Archaeoglobus fulgidus (strain ATCC 49558 / DSM 4304 / JCM 9628 / NBRC 100126 / VC-16), this protein is Putative sulfur carrier protein AF_0188.